A 179-amino-acid polypeptide reads, in one-letter code: Deoxyuridine 5'-triphosphate nucleotidohydrolase, mitochondrial (179 aa).

The transit peptide at M1–K41 directs the protein to the mitochondrion. DUTP-binding positions include R97 to G99, G111 to D114, G122, R165, and F170 to G171.

It belongs to the dUTPase family. In terms of assembly, homotrimer. The cofactor is Mg(2+).

The protein resides in the mitochondrion. The catalysed reaction is dUTP + H2O = dUMP + diphosphate + H(+). It functions in the pathway pyrimidine metabolism; dUMP biosynthesis; dUMP from dCTP (dUTP route): step 2/2. In terms of biological role, this enzyme is involved in nucleotide metabolism: it produces dUMP, the immediate precursor of thymidine nucleotides and it decreases the intracellular concentration of dUTP so that uracil cannot be incorporated into DNA. The chain is Deoxyuridine 5'-triphosphate nucleotidohydrolase, mitochondrial (dut) from Dictyostelium discoideum (Social amoeba).